The sequence spans 382 residues: Succinyl-diaminopimelate desuccinylase (382 aa).

His73 serves as a coordination point for Zn(2+). Asp75 is a catalytic residue. Position 106 (Asp106) interacts with Zn(2+). The active-site Proton acceptor is Glu140. Residues Glu141, Glu169, and His355 each contribute to the Zn(2+) site.

Belongs to the peptidase M20A family. DapE subfamily. Homodimer. Requires Zn(2+) as cofactor. The cofactor is Co(2+).

The catalysed reaction is N-succinyl-(2S,6S)-2,6-diaminopimelate + H2O = (2S,6S)-2,6-diaminopimelate + succinate. It functions in the pathway amino-acid biosynthesis; L-lysine biosynthesis via DAP pathway; LL-2,6-diaminopimelate from (S)-tetrahydrodipicolinate (succinylase route): step 3/3. Functionally, catalyzes the hydrolysis of N-succinyl-L,L-diaminopimelic acid (SDAP), forming succinate and LL-2,6-diaminopimelate (DAP), an intermediate involved in the bacterial biosynthesis of lysine and meso-diaminopimelic acid, an essential component of bacterial cell walls. This Cellvibrio japonicus (strain Ueda107) (Pseudomonas fluorescens subsp. cellulosa) protein is Succinyl-diaminopimelate desuccinylase.